A 102-amino-acid polypeptide reads, in one-letter code: NADH-quinone oxidoreductase subunit K (102 aa).

3 helical membrane-spanning segments follow: residues 6–26 (LEHG…GLMV), 30–50 (ILFV…AFVV), and 62–82 (VMFI…LAIL).

Belongs to the complex I subunit 4L family. As to quaternary structure, NDH-1 is composed of 13 different subunits. Subunits NuoA, H, J, K, L, M, N constitute the membrane sector of the complex.

The protein localises to the cell inner membrane. It catalyses the reaction a quinone + NADH + 5 H(+)(in) = a quinol + NAD(+) + 4 H(+)(out). Its function is as follows. NDH-1 shuttles electrons from NADH, via FMN and iron-sulfur (Fe-S) centers, to quinones in the respiratory chain. The immediate electron acceptor for the enzyme in this species is believed to be ubiquinone. Couples the redox reaction to proton translocation (for every two electrons transferred, four hydrogen ions are translocated across the cytoplasmic membrane), and thus conserves the redox energy in a proton gradient. In Pseudomonas syringae pv. syringae (strain B728a), this protein is NADH-quinone oxidoreductase subunit K.